A 551-amino-acid polypeptide reads, in one-letter code: Dol-P-Man:Man(7)GlcNAc(2)-PP-Dol alpha-1,6-mannosyltransferase (551 aa).

Over 1–2 the chain is Lumenal; sequence MR. Residues 3 to 23 form a helical membrane-spanning segment; the sequence is WSVLDTVLLTVISFHLIQAPF. Residues 24-61 are Cytoplasmic-facing; that stretch reads TKVEESFNIQAIHDILTYSVFDISQYDHLKFPGVVPRT. A helical membrane pass occupies residues 62-82; the sequence is FVGAVIIAMLSRPYLYLSSLI. The Lumenal segment spans residues 83–89; it reads QTSRPTS. A helical membrane pass occupies residues 90-110; the sequence is IDVQLVVRGIVGLTNGLSFIY. The Cytoplasmic segment spans residues 111-136; that stretch reads LKNCLQDMFDEITEKKKEENEDKDIY. A helical transmembrane segment spans residues 137–157; it reads IYDSAGTWFLLFLIGSFHLMF. The Lumenal segment spans residues 158–178; sequence YSTRTLPNFVMTLPLTNVALG. A helical transmembrane segment spans residues 179–199; the sequence is WVLLGRYNAAIFLSALVAIVF. Topologically, residues 200–202 are cytoplasmic; sequence RLE. A helical membrane pass occupies residues 203 to 223; that stretch reads VSALSAGIALFSVIFKKISLF. The Lumenal segment spans residues 224-227; that stretch reads DAIK. The chain crosses the membrane as a helical span at residues 228-248; sequence FGIFGLGLGSAISITVDSYFW. Over 249–275 the chain is Cytoplasmic; it reads QEWCLPEVDGFLFNVVAGYASKWGVEP. A helical membrane pass occupies residues 276–296; that stretch reads VTAYFTHYLRMMFMPPTVLLL. Residues 297 to 303 are Lumenal-facing; the sequence is NYFGYKL. A helical membrane pass occupies residues 304 to 324; that stretch reads APAKLKIVSLASLFHIIVLSF. Residues 325 to 331 lie on the Cytoplasmic side of the membrane; the sequence is QPHKEWR. The chain crosses the membrane as a helical span at residues 332–352; that stretch reads FIIYAVPSIMLLGATGAAHLW. Residues 353-365 are Lumenal-facing; the sequence is ENMKVKKITNVLC. Residues 366–386 form a helical membrane-spanning segment; the sequence is LAILPLSIMTSFFISMAFLYI. Residues 387 to 417 are Cytoplasmic-facing; the sequence is SRMNYPGGEALTSFNDMIVEKNITNATVHIS. The helical transmembrane segment at 418–438 threads the bilayer; the sequence is IPPCMTGVTLFGELNYGVYGI. The Lumenal portion of the chain corresponds to 439–551; the sequence is NYDKTENTTL…KRIKQDEKTD (113 aa).

It belongs to the glycosyltransferase 22 family.

The protein localises to the endoplasmic reticulum membrane. The catalysed reaction is an alpha-D-Man-(1-&gt;2)-alpha-D-Man-(1-&gt;2)-alpha-D-Man-(1-&gt;3)-[alpha-D-Man-(1-&gt;2)-alpha-D-Man-(1-&gt;3)-alpha-D-Man-(1-&gt;6)]-beta-D-Man-(1-&gt;4)-beta-D-GlcNAc-(1-&gt;4)-alpha-D-GlcNAc-diphospho-di-trans,poly-cis-dolichol + a di-trans,poly-cis-dolichyl beta-D-mannosyl phosphate = an alpha-D-Man-(1-&gt;2)-alpha-D-Man-(1-&gt;2)-alpha-D-Man-(1-&gt;3)-[alpha-D-Man-(1-&gt;2)-alpha-D-Man-(1-&gt;3)-[alpha-D-Man-(1-&gt;6)]-alpha-D-Man-(1-&gt;6)]-beta-D-Man-(1-&gt;4)-beta-D-GlcNAc-(1-&gt;4)-alpha-D-GlcNAc-diphospho-di-trans,poly-cis-dolichol + a di-trans,poly-cis-dolichyl phosphate + H(+). It participates in protein modification; protein glycosylation. Its function is as follows. Mannosyltransferase that operates in the biosynthetic pathway of dolichol-linked oligosaccharides, the glycan precursors employed in protein asparagine (N)-glycosylation. The assembly of dolichol-linked oligosaccharides begins on the cytosolic side of the endoplasmic reticulum membrane and finishes in its lumen. The sequential addition of sugars to dolichol pyrophosphate produces dolichol-linked oligosaccharides containing fourteen sugars, including two GlcNAcs, nine mannoses and three glucoses. Once assembled, the oligosaccharide is transferred from the lipid to nascent proteins by oligosaccharyltransferases. In the lumen of the endoplasmic reticulum, adds the eighth mannose residue in an alpha-1,6 linkage onto Man(7)GlcNAc(2)-PP-dolichol to produce Man(8)GlcNAc(2)-PP-dolichol. This chain is Dol-P-Man:Man(7)GlcNAc(2)-PP-Dol alpha-1,6-mannosyltransferase (ALG12), found in Saccharomyces cerevisiae (strain ATCC 204508 / S288c) (Baker's yeast).